Here is an 868-residue protein sequence, read N- to C-terminus: Alanine--tRNA ligase (868 aa).

His-553, His-557, Cys-657, and His-661 together coordinate Zn(2+). The interval 831 to 851 is disordered; that stretch reads GGKGGGRADMAQAGGSRPQAL.

It belongs to the class-II aminoacyl-tRNA synthetase family. The cofactor is Zn(2+).

It localises to the cytoplasm. The catalysed reaction is tRNA(Ala) + L-alanine + ATP = L-alanyl-tRNA(Ala) + AMP + diphosphate. In terms of biological role, catalyzes the attachment of alanine to tRNA(Ala) in a two-step reaction: alanine is first activated by ATP to form Ala-AMP and then transferred to the acceptor end of tRNA(Ala). Also edits incorrectly charged Ser-tRNA(Ala) and Gly-tRNA(Ala) via its editing domain. The chain is Alanine--tRNA ligase from Chromohalobacter salexigens (strain ATCC BAA-138 / DSM 3043 / CIP 106854 / NCIMB 13768 / 1H11).